Here is a 308-residue protein sequence, read N- to C-terminus: Peptidyl-prolyl cis-trans isomerase CYP8 (308 aa).

Residues 56–215 form the PPIase cyclophilin-type domain; sequence FTDPESSEEA…QPITIGYISS (160 aa).

The enzyme catalyses [protein]-peptidylproline (omega=180) = [protein]-peptidylproline (omega=0). Its function is as follows. PPIases accelerate the folding of proteins. It catalyzes the cis-trans isomerization of proline imidic peptide bonds in oligopeptides. The chain is Peptidyl-prolyl cis-trans isomerase CYP8 (CPR8) from Saccharomyces cerevisiae (strain ATCC 204508 / S288c) (Baker's yeast).